A 198-amino-acid chain; its full sequence is Putative peptidyl-prolyl cis-trans isomerase (198 aa).

The 182-residue stretch at 14-195 folds into the PPIase cyclophilin-type domain; it reads NEIKVAMHTN…HDVVIESIDV (182 aa).

This sequence belongs to the cyclophilin-type PPIase family.

It catalyses the reaction [protein]-peptidylproline (omega=180) = [protein]-peptidylproline (omega=0). In terms of biological role, PPIases accelerate the folding of proteins. It catalyzes the cis-trans isomerization of proline imidic peptide bonds in oligopeptides. The sequence is that of Putative peptidyl-prolyl cis-trans isomerase from Staphylococcus haemolyticus (strain JCSC1435).